The chain runs to 42 residues: Potassium channel toxin gamma-KTx 1.10 (42 aa).

Intrachain disulfides connect cysteine 5/cysteine 23, cysteine 11/cysteine 34, cysteine 20/cysteine 39, and cysteine 24/cysteine 41.

In terms of tissue distribution, expressed by the venom gland.

It is found in the secreted. Blocks human Kv11.1/KCNH2/ERG1 potassium channels (reversible, IC(50)=3.4 nM). At high toxin concentrations, block of Kv11.1/KCNH2/ERG1 macroscopic current is almost complete. Does not accelerate the kinetics of the closing process and has no effect on the activation and inactivation kinetics of the Kv11.1/KCNH2/ERG1 channels. The sequence is that of Potassium channel toxin gamma-KTx 1.10 from Centruroides margaritatus (Central American bark Scorpion).